We begin with the raw amino-acid sequence, 364 residues long: Chaperone protein DnaJ (364 aa).

Residues 4–69 (DYYEILGLSK…NKKAKYDRFG (66 aa)) form the J domain. The segment at 135 to 213 (GYKNNINITR…CKGKGRITNQ (79 aa)) adopts a CR-type zinc-finger fold. Residues C148, C151, C165, C168, C187, C190, C201, and C204 each coordinate Zn(2+). CXXCXGXG motif repeat units lie at residues 148-155 (CHSCLGKK), 165-172 (CNMCNGSG), 187-194 (CSKCYGEG), and 201-208 (CKSCKGKG).

This sequence belongs to the DnaJ family. Homodimer. Zn(2+) is required as a cofactor.

Its subcellular location is the cytoplasm. In terms of biological role, participates actively in the response to hyperosmotic and heat shock by preventing the aggregation of stress-denatured proteins and by disaggregating proteins, also in an autonomous, DnaK-independent fashion. Unfolded proteins bind initially to DnaJ; upon interaction with the DnaJ-bound protein, DnaK hydrolyzes its bound ATP, resulting in the formation of a stable complex. GrpE releases ADP from DnaK; ATP binding to DnaK triggers the release of the substrate protein, thus completing the reaction cycle. Several rounds of ATP-dependent interactions between DnaJ, DnaK and GrpE are required for fully efficient folding. Also involved, together with DnaK and GrpE, in the DNA replication of plasmids through activation of initiation proteins. The protein is Chaperone protein DnaJ of Borrelia garinii subsp. bavariensis (strain ATCC BAA-2496 / DSM 23469 / PBi) (Borreliella bavariensis).